Consider the following 551-residue polypeptide: Hyaluronan synthase 2 (551 aa).

The Cytoplasmic portion of the chain corresponds to 1-11 (MHCERFICILR). A helical membrane pass occupies residues 12–32 (IIGTTLFGVSLLLGISAAYIV). At 33–45 (GYQFIQTDNYYFS) the chain is on the extracellular side. The helical transmembrane segment at 46-66 (FGLYGAILALHLIIQSLFAFL) threads the bilayer. Topologically, residues 67-374 (EHRKMKRSLE…NSLWFHKHHL (308 aa)) are cytoplasmic. A helical transmembrane segment spans residues 375 to 395 (WMTYEAVITGFFPFFLIATVI). The Extracellular segment spans residues 396–402 (QLFYRGR). Residues 403–423 (IWNILLFLLTVQLVGLIKSSF) traverse the membrane as a helical segment. The Cytoplasmic segment spans residues 424 to 429 (ASALRG). The chain crosses the membrane as a helical span at residues 430–450 (NIVMVFMSFYSVLYMSSLLPA). Topologically, residues 451–470 (KMFAIATINKAGWGTSGRKT) are extracellular. Residues 471–491 (IVVNFIGLIPITVWFTILLGG) form a helical membrane-spanning segment. Over 492-509 (VCYTIWRETKKPFSESEK) the chain is Cytoplasmic. The chain crosses the membrane as a helical span at residues 510–530 (IVLAVGAILYACYWVMLLTMY). Over 531–551 (VSLVMKCGRRRKEPQHDLVLA) the chain is Extracellular.

It belongs to the NodC/HAS family. As to quaternary structure, homodimer; dimerization promotes enzymatic activity. Mg(2+) is required as a cofactor.

Its subcellular location is the cell membrane. It is found in the endoplasmic reticulum membrane. The protein localises to the vesicle. The protein resides in the golgi apparatus membrane. It localises to the lysosome. The enzyme catalyses [hyaluronan](n) + UDP-N-acetyl-alpha-D-glucosamine = N-acetyl-beta-D-glucosaminyl-(1-&gt;4)-[hyaluronan](n) + UDP + H(+). It carries out the reaction N-acetyl-beta-D-glucosaminyl-(1-&gt;4)-[hyaluronan](n) + UDP-alpha-D-glucuronate = [hyaluronan](n+1) + UDP + H(+). The protein operates within glycan biosynthesis; hyaluronan biosynthesis. Its function is as follows. Catalyzes the addition of GlcNAc or GlcUA monosaccharides to the nascent hyaluronan polymer. Therefore, it is essential to hyaluronan synthesis a major component of most extracellular matrices that has a structural role in tissues architectures and regulates cell adhesion, migration and differentiation. This is one of three isoenzymes responsible for cellular hyaluronan synthesis and it is particularly responsible for the synthesis of high molecular mass hyaluronan. The sequence is that of Hyaluronan synthase 2 (has2) from Xenopus laevis (African clawed frog).